The sequence spans 642 residues: Threonine--tRNA ligase (642 aa).

The TGS domain maps to 1–61 (MPVITLPDGS…ENDATLAIIT (61 aa)). The tract at residues 243–534 (DHRKIGKQLD…LTEEFAGFFP (292 aa)) is catalytic. Cysteine 334, histidine 385, and histidine 511 together coordinate Zn(2+).

Belongs to the class-II aminoacyl-tRNA synthetase family. In terms of assembly, homodimer. The cofactor is Zn(2+).

Its subcellular location is the cytoplasm. It carries out the reaction tRNA(Thr) + L-threonine + ATP = L-threonyl-tRNA(Thr) + AMP + diphosphate + H(+). In terms of biological role, catalyzes the attachment of threonine to tRNA(Thr) in a two-step reaction: L-threonine is first activated by ATP to form Thr-AMP and then transferred to the acceptor end of tRNA(Thr). Also edits incorrectly charged L-seryl-tRNA(Thr). This Salmonella paratyphi C (strain RKS4594) protein is Threonine--tRNA ligase.